The primary structure comprises 185 residues: Crossover junction endodeoxyribonuclease RuvC (185 aa).

Active-site residues include Asp7, Glu66, and Asp137. Mg(2+) is bound by residues Asp7, Glu66, and Asp137.

The protein belongs to the RuvC family. As to quaternary structure, homodimer which binds Holliday junction (HJ) DNA. The HJ becomes 2-fold symmetrical on binding to RuvC with unstacked arms; it has a different conformation from HJ DNA in complex with RuvA. In the full resolvosome a probable DNA-RuvA(4)-RuvB(12)-RuvC(2) complex forms which resolves the HJ. It depends on Mg(2+) as a cofactor.

It localises to the cytoplasm. It carries out the reaction Endonucleolytic cleavage at a junction such as a reciprocal single-stranded crossover between two homologous DNA duplexes (Holliday junction).. Functionally, the RuvA-RuvB-RuvC complex processes Holliday junction (HJ) DNA during genetic recombination and DNA repair. Endonuclease that resolves HJ intermediates. Cleaves cruciform DNA by making single-stranded nicks across the HJ at symmetrical positions within the homologous arms, yielding a 5'-phosphate and a 3'-hydroxyl group; requires a central core of homology in the junction. The consensus cleavage sequence is 5'-(A/T)TT(C/G)-3'. Cleavage occurs on the 3'-side of the TT dinucleotide at the point of strand exchange. HJ branch migration catalyzed by RuvA-RuvB allows RuvC to scan DNA until it finds its consensus sequence, where it cleaves and resolves the cruciform DNA. The sequence is that of Crossover junction endodeoxyribonuclease RuvC from Anaeromyxobacter dehalogenans (strain 2CP-C).